An 807-amino-acid polypeptide reads, in one-letter code: MNRASPAVKTESNPLSTDELRKIDAYWRAANYLSVGQIYLLDNPLLKEPLTVTHIKPRLLGHWGTCPGLSFIYAHLNRIIKKFDLDMFYVCGPGHGGPAMVANTWLEGSYSEFYPRISRDATGMKRLFRQFSFPGGIPSHVAPETAGSINEGGELGYSLSHAFGAAFDNPDLIVACVVGDGEAETGPLAASWHSNKFLNPARDGAVLPILHLNGYKIANPTILARISHEELESLFAGYGYQPYFVEGSDPGPMHQSMAAVLDTAIESIRRIQREARSRGVNSGERQEAVTYPRWPLIILRSPKGWTGPEEVDGKKLEDYWRSHQVPLAELGSKPDHLKQLEDWMRSYKPEELFDENGCLMPELAALAPEGDRRMGANPHANGGLLLKELEMPDFRSYAVDVPVPGTEVREATRETGKFLRDIMKLNLDSSNFRVMGPDETSSNRLDALFDVTARAWVAQQLPEDEHLSPDGRVMEILSEHICQGWLEGYLLTGRHGLFSCYEAFIHIVDSMFNQHAKWLKVSKEIPWRRPIASLNYLLTSHVWRQDHNGFSHQDPGFIDLVVNKKASIIRVYLPPDANTLLYITDKCLRSRNFINVIVAGKQPALQWLDMDAAIRHGSAGIGIWGWASNDQEDEPDVVMACAGDIPTLETLAAVDLLRRHVPELRIRVVNIVDLMTLQPRSEHPDGLSDWDFDTLFTTNKPIIFAYHGYPWLIHRLTYRRTNHPNLHVRGYKEEGTTTTPFDMTVLNDLDRFHLVMDVADRVPKLSSKGAYLKQLMRDKLIDHKRYIRQYGEDMPEIRDWHWPSPGS.

This sequence belongs to the XFP family. It depends on thiamine diphosphate as a cofactor.

The chain is Probable phosphoketolase from Nitrosospira multiformis (strain ATCC 25196 / NCIMB 11849 / C 71).